We begin with the raw amino-acid sequence, 495 residues long: MTLATSSANGAWEAVIGLETHVQLGTNSKIFTCASTTFGDDPNTHIDPVVCGLPGTLPVLNQMVLEYAVKAAMALNLNIAEHSKFDRKQYFYPDLPKNYQISQFDEPIAEEGWIEVEVAEKGKDTYLKRIGIERLHMEEDAGKLVHAGSDRLAGSTHSLVDYNRAGVALAEIVSKPDLRTGREAAEYASEIRRIMRYLGVSDGNMQEGSLRCDVNISVRQGADAPFGTKVEIKNMNSFSAIQKACEYEIQRQIKVYEAGEAVVQETRLWDEGKQLTKSMRSKEGSSDYRYFPDPDLGPIEVMASVREGWRDELPELPAAKRHRYAEEFGLSVYDARVLTDEYPMAEYFEAAVAAGAEAKGVANWIQGDLAAYVNANRISYSTLPFRPEQLAEMVQLIDGGKISGKIAKEILPELLEKGGSPEAIVDQRGLGMISDPAAITTIVEELLAVHPQEVEAFRGGKTKLQSFFVGQLMKKTGGKADPKLANQILSKKLKG.

The protein belongs to the GatB/GatE family. GatB subfamily. As to quaternary structure, heterotrimer of A, B and C subunits.

The enzyme catalyses L-glutamyl-tRNA(Gln) + L-glutamine + ATP + H2O = L-glutaminyl-tRNA(Gln) + L-glutamate + ADP + phosphate + H(+). It carries out the reaction L-aspartyl-tRNA(Asn) + L-glutamine + ATP + H2O = L-asparaginyl-tRNA(Asn) + L-glutamate + ADP + phosphate + 2 H(+). Allows the formation of correctly charged Asn-tRNA(Asn) or Gln-tRNA(Gln) through the transamidation of misacylated Asp-tRNA(Asn) or Glu-tRNA(Gln) in organisms which lack either or both of asparaginyl-tRNA or glutaminyl-tRNA synthetases. The reaction takes place in the presence of glutamine and ATP through an activated phospho-Asp-tRNA(Asn) or phospho-Glu-tRNA(Gln). The polypeptide is Aspartyl/glutamyl-tRNA(Asn/Gln) amidotransferase subunit B (Prochlorococcus marinus (strain MIT 9313)).